A 62-amino-acid polypeptide reads, in one-letter code: Beta-defensin 37 (62 aa).

The first 16 residues, M1–F16, serve as a signal peptide directing secretion. 3 cysteine pairs are disulfide-bonded: C29–C58, C36–C51, and C41–C59.

This sequence belongs to the beta-defensin family. As to expression, only expressed in epididymis (corpus and cauda).

The protein localises to the secreted. Has antibacterial activity. The protein is Beta-defensin 37 (Defb37) of Mus musculus (Mouse).